The chain runs to 939 residues: Intimin (939 aa).

Positions 1-41 (MITHGFYARTRHKHKLKKTFIMLSAGLGLFFYVNQNSFANG) are cleaved as a signal peptide. The interval 40–153 (NGENYFKLGS…KLTKMSPDVT (114 aa)) is peptidoglycan-binding. The segment at 40–153 (NGENYFKLGS…KLTKMSPDVT (114 aa)) is sufficient for homodimerization. The segment at 40–212 (NGENYFKLGS…LQAWLQHYGT (173 aa)) is required for periplasmic localization. The region spanning 63–112 (LFYTLKTGETVADLSKSQDINLSTIWSLNKHLYSSESEMMKAAPGQQIIL) is the LysM domain. The tract at residues 189–430 (DTALGIAGNQ…PQYVNELRTL (242 aa)) is inverse autotransporter. The signature sequence for beta-barrel assembly machinery (BAM), which recognizes the unfolded beta-barrel in the periplasm stretch occupies residues 402–411 (LYSMQFRYQF). Big-1 domains follow at residues 560–653 (VTDF…VIFV) and 660–751 (ITEI…VEFF). The segment at 750 to 939 (FFTTLTIDDG…ESNAYATCVK (190 aa)) is required and sufficient for interaction with intimin receptor Tir. A C-type lectin domain region spans residues 842 to 939 (LIVPNMSKRV…ESNAYATCVK (98 aa)). Residues 842-939 (LIVPNMSKRV…ESNAYATCVK (98 aa)) are intimin receptor Tir-binding. A disulfide bridge links C860 with C937.

The protein belongs to the intimin/invasin family. As to quaternary structure, homodimer. Interacts with Tir.

It is found in the cell outer membrane. Functionally, an inverse autotransporter. Adhesin, which mediates attachment to the human intestine epithelial cells. Necessary for the production of attaching and effacing lesions on infected human tissue culture cells. Anchored to the outer membrane by binding to peptidoglycan (PGN) via its periplasmic domain, thus helping in receptor interactions during host invasion. PGN-binding may also aid in resisting mechanical and chemical stress during transit of the bacterium through the gastrointestinal tract of the host. Periplasmic domain binds purified E.coli PGN sacculi under acidic conditions in vitro and in vivo, but does not bind to chitin. Periplasmic domain binds PGN sacculi with an apparent dissociation constant (Kd) of 0.8 uM. No binding to PGN in vitro at normal physiological pH 7.4. In Escherichia coli O127:H6 (strain E2348/69 / EPEC), this protein is Intimin.